Here is a 545-residue protein sequence, read N- to C-terminus: CTP synthase (545 aa).

The tract at residues 1–266 (MTTRYIFVTG…DELVTKRFGI (266 aa)) is amidoligase domain. Ser14 is a binding site for CTP. Ser14 contributes to the UTP binding site. ATP-binding positions include 15–20 (SLGKGI) and Asp72. Mg(2+) is bound by residues Asp72 and Glu140. CTP-binding positions include 147–149 (DIE), 187–192 (KTKPTQ), and Lys223. Residues 187–192 (KTKPTQ) and Lys223 each bind UTP. Residue 239-241 (KDV) participates in ATP binding. Residues 291-542 (TIGMVGKYIE…VAAAAAHQKR (252 aa)) enclose the Glutamine amidotransferase type-1 domain. Gly352 is an L-glutamine binding site. The Nucleophile; for glutamine hydrolysis role is filled by Cys379. Residues 380 to 383 (LGMQ), Glu403, and Arg470 each bind L-glutamine. Active-site residues include His515 and Glu517.

It belongs to the CTP synthase family. As to quaternary structure, homotetramer.

The catalysed reaction is UTP + L-glutamine + ATP + H2O = CTP + L-glutamate + ADP + phosphate + 2 H(+). It catalyses the reaction L-glutamine + H2O = L-glutamate + NH4(+). It carries out the reaction UTP + NH4(+) + ATP = CTP + ADP + phosphate + 2 H(+). Its pathway is pyrimidine metabolism; CTP biosynthesis via de novo pathway; CTP from UDP: step 2/2. Allosterically activated by GTP, when glutamine is the substrate; GTP has no effect on the reaction when ammonia is the substrate. The allosteric effector GTP functions by stabilizing the protein conformation that binds the tetrahedral intermediate(s) formed during glutamine hydrolysis. Inhibited by the product CTP, via allosteric rather than competitive inhibition. Its function is as follows. Catalyzes the ATP-dependent amination of UTP to CTP with either L-glutamine or ammonia as the source of nitrogen. Regulates intracellular CTP levels through interactions with the four ribonucleotide triphosphates. The sequence is that of CTP synthase from Shewanella woodyi (strain ATCC 51908 / MS32).